Here is a 458-residue protein sequence, read N- to C-terminus: Alpha-2C adrenergic receptor (458 aa).

The Extracellular portion of the chain corresponds to 1 to 51 (MASPALAAALAAAAAEGPNGSDAGEWGSGGGANASGTDWGPPPGQYSAGAV). Residues N19 and N33 are each glycosylated (N-linked (GlcNAc...) asparagine). Residues 52 to 76 (AGLAAVVGFLIVFTVVGNVLVVIAV) form a helical membrane-spanning segment. Over 77 to 88 (LTSRALRAPQNL) the chain is Cytoplasmic. The chain crosses the membrane as a helical span at residues 89-114 (FLVSLASADILVATLVMPFSLANELM). The Extracellular segment spans residues 115–124 (AYWYFGQVWC). A disulfide bridge connects residues C124 and C202. Residues 125 to 147 (GVYLALDVLFCTSSIVHLCAISL) form a helical membrane-spanning segment. The Cytoplasmic portion of the chain corresponds to 148–168 (DRYWSVTQAVEYNLKRTPRRV). A helical membrane pass occupies residues 169–191 (KATIVAVWLISAVISFPPLVSFY). Over 192-207 (RRPDGAAYPQCGLNDE) the chain is Extracellular. The chain crosses the membrane as a helical span at residues 208–231 (TWYILSSCIGSFFAPCLIMGLVYA). The Cytoplasmic portion of the chain corresponds to 232-379 (RIYRVAKLRT…QAREKRFTFV (148 aa)). Positions 245 to 343 (SEKRGPAGPD…SPGPGGRLSR (99 aa)) are disordered. Residues 291 to 303 (RRRRRGALRRGGR) are compositionally biased toward basic residues. A helical transmembrane segment spans residues 380–403 (LAVVMGVFVLCWFPFFFSYSLYGI). Topologically, residues 404–416 (CREACQLPEPLFK) are extracellular. A helical transmembrane segment spans residues 417-437 (FFFWIGYCNSSLNPVIYTVFN). Residues 438–458 (QDFRRSFKHILFRRRRRGFRQ) are Cytoplasmic-facing.

This sequence belongs to the G-protein coupled receptor 1 family. Adrenergic receptor subfamily. ADRA2C sub-subfamily.

It localises to the cell membrane. Its function is as follows. Alpha-2 adrenergic receptors mediate the catecholamine-induced inhibition of adenylate cyclase through the action of G proteins. This is Alpha-2C adrenergic receptor (Adra2c) from Rattus norvegicus (Rat).